The chain runs to 419 residues: MSSKNFSWRYSLAATVLLLSPFDLLASLGMDMYLPAVPFMPNALGTTASTIQLTLTTYLVMIGAGQLLFGPLSDRLGRRPVLLGGGLAYVVASMGLALTSSAEVFLGLRILQACGASACLVSTFATVRDIYAGREESNVIYGILGSMLAMVPAVGPLLGALVDMWLGWRAIFAFLGLGMIAASAAAWRFWPETRVQRVAGLQWSQLLLPVKCLNFWLYTLCYAAGMGSFFVFFSIAPGLMMGRQGVSQLGFSLLFATVAIAMVFTARFMGRVIPKWGSPSVLRMGMGCLIAGAVLLAITEIWALQSVLGFIAPMWLVGIGVATAVSVAPNGALRGFDHVAGTVTAVYFCLGGVLLGSIGTLIISLLPRNTAWPVVVYCLTLATVVLGLSCVSRVKGSRGQGEHDVVALQSAESTSNPNR.

The Extracellular segment spans residues 1-9 (MSSKNFSWR). The helical transmembrane segment at 10-30 (YSLAATVLLLSPFDLLASLGM) threads the bilayer. Over 31 to 46 (DMYLPAVPFMPNALGT) the chain is Cytoplasmic. Residues 47 to 67 (TASTIQLTLTTYLVMIGAGQL) form a helical membrane-spanning segment. Residues 68–80 (LFGPLSDRLGRRP) lie on the Extracellular side of the membrane. A helical membrane pass occupies residues 81–101 (VLLGGGLAYVVASMGLALTSS). The Cytoplasmic segment spans residues 102–109 (AEVFLGLR). Residues 110-127 (ILQACGASACLVSTFATV) traverse the membrane as a helical segment. The Extracellular segment spans residues 128–141 (RDIYAGREESNVIY). Residues 142 to 162 (GILGSMLAMVPAVGPLLGALV) traverse the membrane as a helical segment. Topologically, residues 163-169 (DMWLGWR) are cytoplasmic. Residues 170-187 (AIFAFLGLGMIAASAAAW) form a helical membrane-spanning segment. Residues 188–214 (RFWPETRVQRVAGLQWSQLLLPVKCLN) are Extracellular-facing. Residues 215-235 (FWLYTLCYAAGMGSFFVFFSI) traverse the membrane as a helical segment. The Cytoplasmic portion of the chain corresponds to 236 to 245 (APGLMMGRQG). A helical membrane pass occupies residues 246-266 (VSQLGFSLLFATVAIAMVFTA). Topologically, residues 267–279 (RFMGRVIPKWGSP) are extracellular. Residues 280–299 (SVLRMGMGCLIAGAVLLAIT) form a helical membrane-spanning segment. The Cytoplasmic segment spans residues 300–306 (EIWALQS). A helical transmembrane segment spans residues 307 to 327 (VLGFIAPMWLVGIGVATAVSV). Over 328–342 (APNGALRGFDHVAGT) the chain is Extracellular. A helical transmembrane segment spans residues 343–363 (VTAVYFCLGGVLLGSIGTLII). The Cytoplasmic portion of the chain corresponds to 364 to 370 (SLLPRNT). Residues 371-391 (AWPVVVYCLTLATVVLGLSCV) form a helical membrane-spanning segment. The Extracellular portion of the chain corresponds to 392 to 419 (SRVKGSRGQGEHDVVALQSAESTSNPNR).

The protein belongs to the major facilitator superfamily. Bcr/CmlA family.

The protein localises to the cell inner membrane. Appears to provoke a reduction of the content of the major porins OmpA and OmpC. In Pseudomonas aeruginosa, this protein is Chloramphenicol resistance protein (cmlA).